A 355-amino-acid chain; its full sequence is N-acetyl-gamma-glutamyl-phosphate reductase (355 aa).

Cys-152 is a catalytic residue.

It belongs to the NAGSA dehydrogenase family. Type 1 subfamily.

The protein localises to the cytoplasm. The catalysed reaction is N-acetyl-L-glutamate 5-semialdehyde + phosphate + NADP(+) = N-acetyl-L-glutamyl 5-phosphate + NADPH + H(+). It participates in amino-acid biosynthesis; L-arginine biosynthesis; N(2)-acetyl-L-ornithine from L-glutamate: step 3/4. Its function is as follows. Catalyzes the NADPH-dependent reduction of N-acetyl-5-glutamyl phosphate to yield N-acetyl-L-glutamate 5-semialdehyde. The chain is N-acetyl-gamma-glutamyl-phosphate reductase from Psychrobacter sp. (strain PRwf-1).